The following is a 72-amino-acid chain: Translation initiation factor IF-1 (72 aa).

In terms of domain architecture, S1-like spans 1–72 (MAKEENIEMQ…SKGRIIFRAR (72 aa)).

It belongs to the IF-1 family. In terms of assembly, component of the 30S ribosomal translation pre-initiation complex which assembles on the 30S ribosome in the order IF-2 and IF-3, IF-1 and N-formylmethionyl-tRNA(fMet); mRNA recruitment can occur at any time during PIC assembly.

It localises to the cytoplasm. One of the essential components for the initiation of protein synthesis. Stabilizes the binding of IF-2 and IF-3 on the 30S subunit to which N-formylmethionyl-tRNA(fMet) subsequently binds. Helps modulate mRNA selection, yielding the 30S pre-initiation complex (PIC). Upon addition of the 50S ribosomal subunit IF-1, IF-2 and IF-3 are released leaving the mature 70S translation initiation complex. The protein is Translation initiation factor IF-1 of Colwellia psychrerythraea (strain 34H / ATCC BAA-681) (Vibrio psychroerythus).